A 209-amino-acid polypeptide reads, in one-letter code: MTDDYEKLLEKAKNVLSSSTKNIDRLKIPDPEIIREGKATIIRNFQDIVDIINRDPEHIIKFLTREFGTNIVQNGRRLIINRKLTLEELLDKMNEYINTYVRCYECGSLDTEIQKSGRISLLVCKACGAQHPIHSVREAKDDETIEEGKEYVVEITEVGSSGEGRTNYKGYTIFVPGAKRGETVKVRIKKVKNDVAIGEIIERSKQEKK.

The TRAM domain maps to 144 to 202; sequence TIEEGKEYVVEITEVGSSGEGRTNYKGYTIFVPGAKRGETVKVRIKKVKNDVAIGEIIE.

Belongs to the eIF-2-beta/eIF-5 family. In terms of assembly, heterotrimer composed of an alpha, a beta and a gamma chain.

In terms of biological role, eIF-2 functions in the early steps of protein synthesis by forming a ternary complex with GTP and initiator tRNA. The sequence is that of Translation initiation factor 2 subunit beta (eif2b) from Thermoplasma acidophilum (strain ATCC 25905 / DSM 1728 / JCM 9062 / NBRC 15155 / AMRC-C165).